We begin with the raw amino-acid sequence, 197 residues long: C-type lectin domain family 3 member A (197 aa).

A signal peptide spans 1 to 24 (MAKNGLVIYILVITLLLDQTSCHA). 3 disulfide bridges follow: Cys-68–Cys-78, Cys-95–Cys-191, and Cys-167–Cys-183. The 119-residue stretch at 74–192 (FHKKCYLAAE…CHSSKRYICE (119 aa)) folds into the C-type lectin domain.

Its subcellular location is the secreted. Promotes cell adhesion to laminin and fibronectin. The chain is C-type lectin domain family 3 member A (CLEC3A) from Bos taurus (Bovine).